The chain runs to 503 residues: Probable protein kinase UbiB (503 aa).

A helical membrane pass occupies residues 13–35; that stretch reads TFYRYRLAGLCASLMGSGWICAL. Residues 120–491 enclose the Protein kinase domain; the sequence is EFETEPIASA…QQRQSLWLAV (372 aa). ATP is bound by residues 126 to 134 and Lys148; that span reads IASASIAQV. Catalysis depends on Asp283, which acts as the Proton acceptor. Residues 485–502 form a helical membrane-spanning segment; that stretch reads QSLWLAVIAVVLLLILLL.

Belongs to the ABC1 family. UbiB subfamily.

It is found in the cell inner membrane. Its pathway is cofactor biosynthesis; ubiquinone biosynthesis [regulation]. Its function is as follows. Is probably a protein kinase regulator of UbiI activity which is involved in aerobic coenzyme Q (ubiquinone) biosynthesis. The protein is Probable protein kinase UbiB of Neisseria meningitidis serogroup A / serotype 4A (strain DSM 15465 / Z2491).